A 196-amino-acid polypeptide reads, in one-letter code: Imidazoleglycerol-phosphate dehydratase (196 aa).

The protein belongs to the imidazoleglycerol-phosphate dehydratase family.

The protein resides in the cytoplasm. It catalyses the reaction D-erythro-1-(imidazol-4-yl)glycerol 3-phosphate = 3-(imidazol-4-yl)-2-oxopropyl phosphate + H2O. Its pathway is amino-acid biosynthesis; L-histidine biosynthesis; L-histidine from 5-phospho-alpha-D-ribose 1-diphosphate: step 6/9. This Acidiphilium cryptum (strain JF-5) protein is Imidazoleglycerol-phosphate dehydratase.